Here is a 367-residue protein sequence, read N- to C-terminus: Glycolate oxidase 3 (367 aa).

Residues Met-1–Asp-360 form the FMN hydroxy acid dehydrogenase domain. Tyr-25 lines the glyoxylate pocket. Residues Pro-78–Ala-80, Ser-107, Gln-128–Tyr-130, and Thr-156 contribute to the FMN site. Glyoxylate is bound at residue Tyr-130. Arg-165 contacts glyoxylate. Residues Lys-231 and Ser-253 each contribute to the FMN site. 2 residues coordinate glyoxylate: His-255 and Arg-258. His-255 (proton acceptor) is an active-site residue. FMN contacts are provided by residues Asp-286–Arg-290 and Gly-309–Arg-310. Residues Ser-365 to Leu-367 carry the Microbody targeting signal motif.

It belongs to the FMN-dependent alpha-hydroxy acid dehydrogenase family. As to quaternary structure, homotetramer. It depends on FMN as a cofactor.

It localises to the peroxisome. The enzyme catalyses glycolate + O2 = glyoxylate + H2O2. The protein operates within photosynthesis; photorespiration; glycine from 2-phosphoglycolate: step 2/3. Catalyzes the oxidation of glycolate to glyoxylate, with a reduction of O2 to H2O2. Is a key enzyme in photorespiration in green plants. This is Glycolate oxidase 3 (GLO3) from Oryza sativa subsp. indica (Rice).